The sequence spans 65 residues: Large ribosomal subunit protein uL29 (65 aa).

The protein belongs to the universal ribosomal protein uL29 family.

This Xylella fastidiosa (strain 9a5c) protein is Large ribosomal subunit protein uL29 (rpmC).